Here is a 949-residue protein sequence, read N- to C-terminus: Coiled-coil domain-containing protein 66 (949 aa).

Thr-115 and Thr-121 each carry phosphothreonine. At Ser-369 the chain carries Phosphoserine. The stretch at Gln-474 to Lys-558 forms a coiled coil. Positions Gly-570–Phe-949 are mediates localization to cilia, centrosomes and spindle microtubules and the interaction with PCM1, CEP290, CEP104 and CSPP1. Ser-606 is subject to Phosphoserine. Disordered stretches follow at residues Gln-691 to Ile-714 and Ser-789 to Gln-809.

In terms of assembly, homodimer; disulfide-linked. Interacts with CEP290. Interacts with PCM1. Interacts with ARMC9, TOGARAM1, CSPP1 and CEP104. Interacts with CDK5RAP2, CEP152, CEP192, TBG1 and PRC1.

Its subcellular location is the cytoplasm. It is found in the cytoskeleton. The protein resides in the microtubule organizing center. The protein localises to the centrosome. It localises to the centriolar satellite. Its subcellular location is the cell projection. It is found in the cilium. The protein resides in the cilium basal body. The protein localises to the cilium axoneme. It localises to the photoreceptor inner segment. Its subcellular location is the photoreceptor outer segment. In terms of biological role, microtubule-binding protein required for ciliogenesis. May function in ciliogenesis by mediating the transport of proteins like BBS4 to the cilium, but also through the organization of the centriolar satellites. Required for the assembly of signaling-competent cilia with proper structure and length. Mediates this function in part by regulating transition zone assembly and basal body recruitment of the IFT-B complex. Cooperates with the ciliopathy proteins CSPP1 and CEP104 during cilium length regulation. Plays two important roles during cell division. First, is required for mitotic progression via regulation of spindle assembly, organization and orientation, levels of spindle microtubules (MTs), kinetochore-fiber integrity, and chromosome alignment. Second, functions during cytokinesis in part by regulating assembly and organization of central spindle and midbody MTs Plays a role in retina morphogenesis and/or homeostasis. The sequence is that of Coiled-coil domain-containing protein 66 from Pongo abelii (Sumatran orangutan).